A 530-amino-acid chain; its full sequence is MGAAASRRRALRSEAMSSVAAKVRAARAFGEYLSQSHPENRNGADHLLADAYSGHDGSPEMQPAPQNKRRLSLVSNGCYEGSLSEEPSIRKPAGEGPQPRVYTISGEPALLPSPEAEAIELAVVKGRRQRHPHHHSQPLRASPGGSREDVSRPCQSWAGSRQGSKECPGCAQLAPGPTPRAFGLDQPPLPETSGRRKKLERMYSVDRVSDDIPIRTWFPKENLFSFQTATTTMQAISVFRGYAERKRRKRENDSASVIQRNFRKHLRMVGSRRVKAQTFAERRERSFSRSWSDPTPMKADTSHDSRDSSDLQSSHCTLDEAFEDLDWDTEKGLEAVACDTEGFVPPKVMLISSKVPKAEYIPTIIRRDDPSIIPILYDHEHATFEDILEEIERKLNVYHKGAKIWKMLIFCQGGPGHLYLLKNKVATFAKVEKEEDMIHFWKRLSRLMSKVNPEPNVIHIMGCYILGNPNGEKLFQNLRTLMTPYRVTFESPLELSAQGKQMIETYFDFRLYRLWKSRQHSKLLDFDDVL.

The N-myristoyl glycine moiety is linked to residue G2. The necessary and sufficient to elicit dendritic processes and synaptic contacts stretch occupies residues 2–233 (GAAASRRRAL…FSFQTATTTM (232 aa)). 2 disordered regions span residues 34–67 (SQSHPENRNGADHLLADAYSGHDGSPEMQPAPQN) and 125–197 (KGRR…GRRK). Residues 38 to 48 (PENRNGADHLL) are compositionally biased toward basic and acidic residues. Basic residues predominate over residues 125-137 (KGRRQRHPHHHSQ). Residues 153–162 (PCQSWAGSRQ) show a composition bias toward polar residues. S204 bears the Phosphoserine mark. A Nuclear localization signal motif is present at residues 247–250 (RRKR). A disordered region spans residues 285 to 312 (RSFSRSWSDPTPMKADTSHDSRDSSDLQ). A phosphoserine mark is found at S290 and S292. The span at 300 to 309 (DTSHDSRDSS) shows a compositional bias: basic and acidic residues.

It belongs to the NSMF family. As to quaternary structure, interacts with KPNA1; the interaction occurs in a calcium-independent manner after synaptic NMDA receptor stimulation and is required for nuclear import of NSMF but is competed by CABP1. Interacts (via the central NLS-containing motif region) with CABP1 (via EF-hands 1 and 2); the interaction occurs in a calcium-dependent manner after synaptic NMDA receptor stimulation and prevents the nuclear import of NSMF. Cannot be competed by calmodulin. Post-translationally, proteolytically processed after NMDA receptor activation. Cleaved in a calcium-dependent and calpain-sensitive manner. Calpain cleavage is essential for the translocation process from dendrites to the nucleus. As to expression, highly expressed in adult and fetal brain. Weakly expressed in heart, liver, spleen, testis, small intestine, skeletal muscle, peripheral white blood cells and kidney.

It is found in the nucleus. The protein localises to the nucleus envelope. The protein resides in the nucleus membrane. It localises to the nucleus matrix. Its subcellular location is the cytoplasm. It is found in the cell cortex. The protein localises to the cytoskeleton. The protein resides in the cell membrane. It localises to the cell projection. Its subcellular location is the dendrite. It is found in the synapse. The protein localises to the synaptosome. The protein resides in the postsynaptic density. It localises to the membrane. Functionally, couples NMDA-sensitive glutamate receptor signaling to the nucleus and triggers long-lasting changes in the cytoarchitecture of dendrites and spine synapse processes. Part of the cAMP response element-binding protein (CREB) shut-off signaling pathway. Stimulates outgrowth of olfactory axons and migration of gonadotropin-releasing hormone (GnRH) and luteinizing-hormone-releasing hormone (LHRH) neuronal cells. The polypeptide is NMDA receptor synaptonuclear signaling and neuronal migration factor (NSMF) (Homo sapiens (Human)).